Consider the following 518-residue polypeptide: Chromosomal replication initiator protein DnaA (518 aa).

A domain I, interacts with DnaA modulators region spans residues 1 to 72 (MTLAEFWPLC…VREELAAGRS (72 aa)). A domain II region spans residues 72 to 180 (SAFVFKPGEG…DAEEARYEQT (109 aa)). Positions 145–172 (EPRQAAGSASRPESVAVAKARTDVQRDA) are disordered. Residues 181 to 397 (NLSPDYTFDT…GAFNRVGASS (217 aa)) are domain III, AAA+ region. Residues Gly-225, Gly-227, Lys-228, and Thr-229 each contribute to the ATP site. The domain IV, binds dsDNA stretch occupies residues 398-518 (RFMNRPVIDI…YEKLLILIQN (121 aa)).

This sequence belongs to the DnaA family. As to quaternary structure, oligomerizes as a right-handed, spiral filament on DNA at oriC.

Its subcellular location is the cytoplasm. Functionally, plays an essential role in the initiation and regulation of chromosomal replication. ATP-DnaA binds to the origin of replication (oriC) to initiate formation of the DNA replication initiation complex once per cell cycle. Binds the DnaA box (a 9 base pair repeat at the origin) and separates the double-stranded (ds)DNA. Forms a right-handed helical filament on oriC DNA; dsDNA binds to the exterior of the filament while single-stranded (ss)DNA is stabiized in the filament's interior. The ATP-DnaA-oriC complex binds and stabilizes one strand of the AT-rich DNA unwinding element (DUE), permitting loading of DNA polymerase. After initiation quickly degrades to an ADP-DnaA complex that is not apt for DNA replication. Binds acidic phospholipids. The protein is Chromosomal replication initiator protein DnaA of Neisseria meningitidis serogroup B (strain ATCC BAA-335 / MC58).